A 394-amino-acid polypeptide reads, in one-letter code: Exodeoxyribonuclease 7 large subunit (394 aa).

It belongs to the XseA family. In terms of assembly, heterooligomer composed of large and small subunits.

It is found in the cytoplasm. The catalysed reaction is Exonucleolytic cleavage in either 5'- to 3'- or 3'- to 5'-direction to yield nucleoside 5'-phosphates.. Bidirectionally degrades single-stranded DNA into large acid-insoluble oligonucleotides, which are then degraded further into small acid-soluble oligonucleotides. This Thermotoga maritima (strain ATCC 43589 / DSM 3109 / JCM 10099 / NBRC 100826 / MSB8) protein is Exodeoxyribonuclease 7 large subunit.